Reading from the N-terminus, the 103-residue chain is UPF0122 protein FN1394 (103 aa).

This sequence belongs to the UPF0122 family.

Might take part in the signal recognition particle (SRP) pathway. This is inferred from the conservation of its genetic proximity to ftsY/ffh. May be a regulatory protein. The sequence is that of UPF0122 protein FN1394 from Fusobacterium nucleatum subsp. nucleatum (strain ATCC 25586 / DSM 15643 / BCRC 10681 / CIP 101130 / JCM 8532 / KCTC 2640 / LMG 13131 / VPI 4355).